Reading from the N-terminus, the 207-residue chain is Small ribosomal subunit protein uS4c (207 aa).

Residues 92 to 156 enclose the S4 RNA-binding domain; the sequence is MRLDNILFRL…YQSIITKRIE (65 aa).

Belongs to the universal ribosomal protein uS4 family. In terms of assembly, part of the 30S ribosomal subunit. Contacts protein S5. The interaction surface between S4 and S5 is involved in control of translational fidelity.

The protein resides in the plastid. It localises to the chloroplast. Its function is as follows. One of the primary rRNA binding proteins, it binds directly to 16S rRNA where it nucleates assembly of the body of the 30S subunit. Functionally, with S5 and S12 plays an important role in translational accuracy. The sequence is that of Small ribosomal subunit protein uS4c (rps4) from Equisetum arvense (Field horsetail).